The following is a 198-amino-acid chain: ATP-dependent Clp protease proteolytic subunit 1 (198 aa).

The Nucleophile role is filled by serine 96. Residue histidine 121 is part of the active site.

The protein belongs to the peptidase S14 family. In terms of assembly, fourteen ClpP subunits assemble into 2 heptameric rings which stack back to back to give a disk-like structure with a central cavity, resembling the structure of eukaryotic proteasomes.

It is found in the cytoplasm. The enzyme catalyses Hydrolysis of proteins to small peptides in the presence of ATP and magnesium. alpha-casein is the usual test substrate. In the absence of ATP, only oligopeptides shorter than five residues are hydrolyzed (such as succinyl-Leu-Tyr-|-NHMec, and Leu-Tyr-Leu-|-Tyr-Trp, in which cleavage of the -Tyr-|-Leu- and -Tyr-|-Trp bonds also occurs).. Functionally, cleaves peptides in various proteins in a process that requires ATP hydrolysis. Has a chymotrypsin-like activity. Plays a major role in the degradation of misfolded proteins. This Synechocystis sp. (strain ATCC 27184 / PCC 6803 / Kazusa) protein is ATP-dependent Clp protease proteolytic subunit 1.